Consider the following 724-residue polypeptide: Palmitoyltransferase AKR1 (724 aa).

The Cytoplasmic segment spans residues 1 to 308 (MSGQLNVAED…HAKMVTFFTP (308 aa)). 6 ANK repeats span residues 54-84 (PTLV…DVKA), 90-119 (EQVS…DVNI), 124-153 (LEAT…DPLI), 157-187 (QGYN…PVDS), 191-220 (TGKT…DVRV), and 224-253 (GGFT…DVFL). The helical transmembrane segment at 309-329 (WLILGLILSFFAYFSILLAIL) threads the bilayer. Topologically, residues 330–331 (GC) are lumenal. A helical transmembrane segment spans residues 332 to 352 (LLTVLAAGYGLYNFVFPSFIL). Topologically, residues 353–360 (MKRIVIFK) are cytoplasmic. The chain crosses the membrane as a helical span at residues 361–381 (TPLLAGILSGTIFWLLYVWLF). Over 382-392 (KMLPATFDDEP) the chain is Lumenal. A helical transmembrane segment spans residues 393–413 (ILNLTVFALFAGVVFLLTKLL). At 414–489 (QSDPGYIVPA…YNYIGFRNHK (76 aa)) the chain is on the cytoplasmic side. The DHHC domain maps to 446-496 (HFCIHSWIRLPLRAKYKRFVHSVILRYDHYCPWIYNYIGFRNHKIFIYFIL). C476 serves as the catalytic S-palmitoyl cysteine intermediate. The helical transmembrane segment at 490 to 510 (IFIYFILLLDLGILALAKLCL) threads the bilayer. Residues 511–543 (EYFDELKDHAKNKDALKCSILSKDLCAGFTYDP) lie on the Lumenal side of the membrane. Residues 544–564 (FTLFLLEWVCVQGMWILALSF) form a helical membrane-spanning segment. The Cytoplasmic segment spans residues 565–724 (VQFFECLKGV…ERVISIEEIV (160 aa)).

This sequence belongs to the DHHC palmitoyltransferase family. AKR/ZDHHC17 subfamily.

The protein resides in the early endosome membrane. The protein localises to the golgi apparatus membrane. The enzyme catalyses L-cysteinyl-[protein] + hexadecanoyl-CoA = S-hexadecanoyl-L-cysteinyl-[protein] + CoA. Palmitoyltransferase specific for casein kinase 1. The protein is Palmitoyltransferase AKR1 (AKR1) of Eremothecium gossypii (strain ATCC 10895 / CBS 109.51 / FGSC 9923 / NRRL Y-1056) (Yeast).